Here is a 102-residue protein sequence, read N- to C-terminus: Scorpine-like-2 (102 aa).

An N-terminal signal peptide occupies residues 1 to 19; the sequence is MQTQCTVLQLLVLVALCSC. Positions 63-102 constitute a BetaSPN-type CS-alpha/beta domain; it reads QQLCLIVDTVQWCNKSCLAAENKEGYCHGTKCKCGIKVSY. 3 cysteine pairs are disulfide-bonded: Cys-66-Cys-89, Cys-75-Cys-94, and Cys-79-Cys-96.

The protein belongs to the long chain scorpion toxin family. Class 3 subfamily. In terms of tissue distribution, expressed by the venom gland.

The protein localises to the secreted. Functionally, inhibits voltage-gated potassium channels. The protein is Scorpine-like-2 of Urodacus yaschenkoi (Inland robust scorpion).